Reading from the N-terminus, the 281-residue chain is NADPH-dependent 7-cyano-7-deazaguanine reductase (281 aa).

87-89 contributes to the substrate binding site; the sequence is IES. 89-90 lines the NADPH pocket; that stretch reads SK. Cysteine 188 (thioimide intermediate) is an active-site residue. Catalysis depends on aspartate 195, which acts as the Proton donor. Substrate is bound at residue 227 to 228; sequence HE. 256–257 is an NADPH binding site; the sequence is RG. Residues 261–281 are disordered; it reads INPYRSTEQDKPAHNNRMARQ.

Belongs to the GTP cyclohydrolase I family. QueF type 2 subfamily. Homodimer.

The protein localises to the cytoplasm. The catalysed reaction is 7-aminomethyl-7-carbaguanine + 2 NADP(+) = 7-cyano-7-deazaguanine + 2 NADPH + 3 H(+). Its pathway is tRNA modification; tRNA-queuosine biosynthesis. In terms of biological role, catalyzes the NADPH-dependent reduction of 7-cyano-7-deazaguanine (preQ0) to 7-aminomethyl-7-deazaguanine (preQ1). This is NADPH-dependent 7-cyano-7-deazaguanine reductase from Vibrio campbellii (strain ATCC BAA-1116).